The following is a 208-amino-acid chain: Troponin I, cardiac muscle (208 aa).

Disordered stretches follow at residues 1-37 (MAEE…KISA), 54-74 (DLER…GELC), and 168-208 (VRKD…GGQS). An N-acetylalanine modification is found at Ala-2. Residues 28–73 (HAKRQSKISASRKLQLKTLLLQRAKRDLEREEQERAGEKQRHLGEL) form an involved in binding TNC region. Basic and acidic residues-rich tracts occupy residues 54–71 (DLER…RHLG) and 168–187 (VRKD…RKNV).

Belongs to the troponin I family. In terms of assembly, binds to actin and tropomyosin.

Its function is as follows. Troponin I is the inhibitory subunit of troponin, the thin filament regulatory complex which confers calcium-sensitivity to striated muscle actomyosin ATPase activity. The polypeptide is Troponin I, cardiac muscle (TNNI3) (Coturnix japonica (Japanese quail)).